A 204-amino-acid polypeptide reads, in one-letter code: dITP/XTP pyrophosphatase (204 aa).

7–12 contacts substrate; that stretch reads TNNKDK. Residues Asp38 and Asp74 each contribute to the Mg(2+) site. Asp74 functions as the Proton acceptor in the catalytic mechanism. Substrate-binding positions include Ser75, 156–159, Lys179, and 184–185; these read FGYD and HR.

Belongs to the HAM1 NTPase family. As to quaternary structure, homodimer. Mg(2+) serves as cofactor.

The enzyme catalyses XTP + H2O = XMP + diphosphate + H(+). The catalysed reaction is dITP + H2O = dIMP + diphosphate + H(+). It catalyses the reaction ITP + H2O = IMP + diphosphate + H(+). Its function is as follows. Pyrophosphatase that catalyzes the hydrolysis of nucleoside triphosphates to their monophosphate derivatives, with a high preference for the non-canonical purine nucleotides XTP (xanthosine triphosphate), dITP (deoxyinosine triphosphate) and ITP. Seems to function as a house-cleaning enzyme that removes non-canonical purine nucleotides from the nucleotide pool, thus preventing their incorporation into DNA/RNA and avoiding chromosomal lesions. This Campylobacter fetus subsp. fetus (strain 82-40) protein is dITP/XTP pyrophosphatase.